The primary structure comprises 524 residues: Cytochrome P450 monooxygenase oblB (524 aa).

A run of 3 helical transmembrane segments spans residues 18-38, 225-245, and 322-342; these read ILNA…GLVI, FHSG…IHLI, and VLIG…VYYI. Residue cysteine 466 coordinates heme.

The protein belongs to the cytochrome P450 family. The cofactor is heme.

It is found in the membrane. It catalyses the reaction ophiobolin F + 4 reduced [NADPH--hemoprotein reductase] + 4 O2 = ophiobolin C + 4 oxidized [NADPH--hemoprotein reductase] + 6 H2O + 4 H(+). It functions in the pathway secondary metabolite biosynthesis; terpenoid biosynthesis. Its function is as follows. Cytochrome P450 monooxygenase; part of the gene cluster that mediates the biosynthesis of the sesterterpenes ophiobolins, fungal phytotoxins with potential anti-cancer activities. The first step of the pathway is performed by the sesterterpene synthase oblA that possesses both prenyl transferase and terpene cyclase activity, converting isopentenyl diphosphate and dimethylallyl diphosphate into geranylfarnesyl diphosphate (GFPP) and further converting GFPP into ophiobolin F, respectively. Other sesterterpenoids (C(25) terpenoids) are found as minor products of oblA. The cytochrome P450 monooxygenase oblB then catalyzes a four-step oxidative transformation of ophiobolin F to yield ophiobolin C. The FAD-dependent oxidoreductase oblC might be involved in a later oxidation step that produces ophiobolin A. The polypeptide is Cytochrome P450 monooxygenase oblB (Cochliobolus heterostrophus (strain C5 / ATCC 48332 / race O) (Southern corn leaf blight fungus)).